The chain runs to 1091 residues: Rho GTPase-activating protein 7 (1091 aa).

Residues 11-78 (LTQIEAKEAC…LNKCAVMKLE (68 aa)) form the SAM domain. Phosphoserine occurs at positions 86, 89, and 320. Residues 273 to 447 (QLNCVEISAL…RLSIYDNVPG (175 aa)) form a focal adhesion-targeting (FAT) region. 3 disordered regions span residues 292-327 (VRKR…RTRS), 382-439 (PKAL…SSRL), and 491-553 (SDEG…GVGA). Low complexity-rich tracts occupy residues 297 to 323 (VSNS…SPVT) and 386 to 400 (SNGS…SSVN). A compositionally biased stretch (basic and acidic residues) spans 414 to 425 (LRRENSSDSPKE). Residues 499 to 511 (ALDSVSPCPSSPK) show a composition bias toward polar residues. Basic and acidic residues predominate over residues 513-523 (IHLDVDNDRAT). Positions 526–535 (DLDSTGNSLN) are enriched in polar residues. Positions 614 to 636 (KHGFSWAVPKFMKRIKVPDYKDR) are polybasic cluster (PBR). The region spanning 641 to 847 (VPLTVNVQRT…HMIAECKKLF (207 aa)) is the Rho-GAP domain. The 208-residue stretch at 877–1084 (RNDESADYQH…RDSFSNQNTE (208 aa)) folds into the START domain.

As to quaternary structure, interacts with EF1A1, facilitates EF1A1 distribution to the membrane periphery and ruffles upon growth factor stimulation and suppresses cell migration. Interacts with tensin TNS1 (via N-terminus); the interaction is decreased by phosphorylation of TNS1. Interacts with TNS3 and PTEN; in resting cells, interacts with TNS3 (via C2 tensin-type domain) but, following growth factor stimulation, TNS3 and PTEN are phosphorylated which leads to weakened interaction with TNS3 and enhanced interaction with PTEN. Interacts (via C-terminus) with tensin TNS4 (via SH2 domain); the interaction is independent of tyrosine phosphorylation of DLC1.

Its subcellular location is the cytoplasm. It localises to the cell junction. The protein resides in the focal adhesion. It is found in the membrane. Functions as a GTPase-activating protein for the small GTPases RHOA, RHOB, RHOC and CDC42, terminating their downstream signaling. This induces morphological changes and detachment through cytoskeletal reorganization, playing a critical role in biological processes such as cell migration and proliferation. Also functions in vivo as an activator of the phospholipase PLCD1. Active DLC1 increases cell migration velocity but reduces directionality. Required for growth factor-induced epithelial cell migration; in resting cells, interacts with TNS3 while PTEN interacts with the p85 regulatory subunit of the PI3K kinase complex but growth factor stimulation induces phosphorylation of TNS3 and PTEN, causing them to change their binding preference so that PTEN interacts with DLC1 and TNS3 interacts with p85. The PTEN-DLC1 complex translocates to the posterior of migrating cells to activate RHOA while the TNS3-p85 complex translocates to the leading edge of migrating cells to promote RAC1 activation. The polypeptide is Rho GTPase-activating protein 7 (DLC1) (Canis lupus familiaris (Dog)).